Here is a 477-residue protein sequence, read N- to C-terminus: Aryl-phospho-beta-D-glucosidase BglC (477 aa).

The Proton donor role is filled by Glu170. Glu378 acts as the Nucleophile in catalysis.

Belongs to the glycosyl hydrolase 1 family.

The enzyme catalyses 6-phospho-beta-D-glucosyl-(1-&gt;4)-D-glucose + H2O = D-glucose 6-phosphate + D-glucose. Its function is as follows. Is able to catalyze the hydrolysis of aryl-phospho-beta-D-glucosides such as 4-methylumbelliferyl-phospho-beta-D-glucopyranoside (MUG-P), phosphoarbutin and phosphosalicin. Is not essential for growth on arbutin and salicin as the sole carbon source. This chain is Aryl-phospho-beta-D-glucosidase BglC (bglC), found in Bacillus subtilis (strain 168).